A 222-amino-acid polypeptide reads, in one-letter code: Ribose-5-phosphate isomerase A (222 aa).

Substrate contacts are provided by residues 28–31, 81–84, and 94–97; these read TGST, DGAD, and KGGG. Glu103 acts as the Proton acceptor in catalysis. Lys121 contacts substrate.

This sequence belongs to the ribose 5-phosphate isomerase family. As to quaternary structure, homodimer.

The catalysed reaction is aldehydo-D-ribose 5-phosphate = D-ribulose 5-phosphate. The protein operates within carbohydrate degradation; pentose phosphate pathway; D-ribose 5-phosphate from D-ribulose 5-phosphate (non-oxidative stage): step 1/1. Catalyzes the reversible conversion of ribose-5-phosphate to ribulose 5-phosphate. In Azoarcus sp. (strain BH72), this protein is Ribose-5-phosphate isomerase A.